Consider the following 500-residue polypeptide: Glycerol kinase (500 aa).

Threonine 16 serves as a coordination point for ADP. Residues threonine 16 and threonine 17 each contribute to the ATP site. Threonine 16 is a binding site for sn-glycerol 3-phosphate. An ADP-binding site is contributed by arginine 20. Residues arginine 86, glutamate 87, tyrosine 138, and aspartate 247 each contribute to the sn-glycerol 3-phosphate site. Positions 86, 87, 138, 247, and 248 each coordinate glycerol. ADP contacts are provided by threonine 269 and glycine 312. Threonine 269, glycine 312, glutamine 316, and glycine 413 together coordinate ATP. Residues glycine 413 and asparagine 417 each coordinate ADP.

This sequence belongs to the FGGY kinase family.

The enzyme catalyses glycerol + ATP = sn-glycerol 3-phosphate + ADP + H(+). It functions in the pathway polyol metabolism; glycerol degradation via glycerol kinase pathway; sn-glycerol 3-phosphate from glycerol: step 1/1. With respect to regulation, inhibited by fructose 1,6-bisphosphate (FBP). Functionally, key enzyme in the regulation of glycerol uptake and metabolism. Catalyzes the phosphorylation of glycerol to yield sn-glycerol 3-phosphate. The chain is Glycerol kinase from Rippkaea orientalis (strain PCC 8801 / RF-1) (Cyanothece sp. (strain PCC 8801)).